A 255-amino-acid chain; its full sequence is tRNA (guanine-N(7)-)-methyltransferase (255 aa).

Residues methionine 1 to valine 35 form a disordered region. Positions leucine 13–alanine 23 are enriched in basic residues. S-adenosyl-L-methionine-binding positions include glycine 75, glutamate 98–leucine 99, asparagine 131–serine 132, and leucine 151. Residue aspartate 154 is part of the active site. S-adenosyl-L-methionine is bound at residue threonine 229–glutamate 231.

The protein belongs to the class I-like SAM-binding methyltransferase superfamily. TrmB family.

It is found in the nucleus. It carries out the reaction guanosine(46) in tRNA + S-adenosyl-L-methionine = N(7)-methylguanosine(46) in tRNA + S-adenosyl-L-homocysteine. The protein operates within tRNA modification; N(7)-methylguanine-tRNA biosynthesis. Functionally, catalyzes the formation of N(7)-methylguanine at position 46 (m7G46) in tRNA. In Zea mays (Maize), this protein is tRNA (guanine-N(7)-)-methyltransferase.